Reading from the N-terminus, the 400-residue chain is Endoplasmin (400 aa).

An N6-succinyllysine modification is found at lysine 1. Asparagine 42 is a glycosylation site (N-linked (GlcNAc...) asparagine). Serine 44 carries the phosphoserine modification. The residue at position 76 (lysine 76) is an N6-acetyllysine. 2 N-linked (GlcNAc...) asparagine glycosylation sites follow: asparagine 78 and asparagine 99. An N6-succinyllysine modification is found at lysine 230. The interval 346–400 is disordered; that stretch reads IDPEAQVEEEPEEEPEDTTEDTEQDEEEEVDAGTEEEEEEEQETAKESTAEKDEL. Positions 350–387 are enriched in acidic residues; the sequence is AQVEEEPEEEPEDTTEDTEQDEEEEVDAGTEEEEEEEQ. A Phosphothreonine modification is found at threonine 379. The segment covering 388–400 has biased composition (basic and acidic residues); the sequence is ETAKESTAEKDEL. The Prevents secretion from ER motif lies at 397–400; it reads KDEL.

The protein belongs to the heat shock protein 90 family. Homodimer; disulfide-linked. Component of an EIF2 complex at least composed of CELF1/CUGBP1, CALR, CALR3, EIF2S1, EIF2S2, HSP90B1 and HSPA5. Part of a large chaperone multiprotein complex comprising DNAJB11, HSP90B1, HSPA5, HYOU, PDIA2, PDIA4, PDIA6, PPIB, SDF2L1, UGGT1 and very small amounts of ERP29, but not, or at very low levels, CALR nor CANX. Interacts with AIMP1; regulates its retention in the endoplasmic reticulum. Hyperglycosylated form interacts with OS9; promoting its degradation by the endoplasmic reticulum associated degradation (ERAD). Interacts with CNPY3. This interaction is disrupted in the presence of ATP. Interacts with TLR4 and TLR9, but not with TLR3. Interacts with MZB1 in a calcium-dependent manner. Interacts with METTL23. Interacts with IL1B; the interaction facilitates cargo translocation into the ERGIC. Interacts with EIF2AK3. Post-translationally, phosphorylated by CK2. N-glycosylated cotranslationally at Asn-217 by STT3A-containing OST-A complex: this glycosylation is constitutive. In response to various stress, 5 additional facultative sites (Asn-62, Asn-107, Asn-445, Asn-481 and Asn-502) can be glycosylated post-translationally by STT3B-containing OST-B complex, leading to a hyperglycosylated form that is degraded by the ER-associated degradation (ERAD) pathway. In normal conditions, the OST-A complex together with CCDC134 prevent glycosylation at facultative sites during protein folding, thereby preventing hyperglycosylation. Mechanistically, nascent HSP90B1 is tethered during translation to a specialized CCDC134-containing translocon that forms a microenvironment for its folding, in which STT3A associates with the SRT pseudosubstrate motif, and prevents access to facultative glycosylation sites until folding is completed, rendering its facultative sites inaccessible to the OST-B complex.

The protein resides in the endoplasmic reticulum lumen. It localises to the sarcoplasmic reticulum lumen. The protein localises to the melanosome. It catalyses the reaction ATP + H2O = ADP + phosphate + H(+). Its function is as follows. ATP-dependent chaperone involved in the processing of proteins in the endoplasmic reticulum, regulating their transport. Together with MESD, acts as a modulator of the Wnt pathway by promoting the folding of LRP6, a coreceptor of the canonical Wnt pathway. When associated with CNPY3, required for proper folding of Toll-like receptors. Promotes folding and trafficking of TLR4 to the cell surface. May participate in the unfolding of cytosolic leaderless cargos (lacking the secretion signal sequence) such as the interleukin 1/IL-1 to facilitate their translocation into the ERGIC (endoplasmic reticulum-Golgi intermediate compartment) and secretion; the translocation process is mediated by the cargo receptor TMED10. The protein is Endoplasmin (HSP90B1) of Mesocricetus auratus (Golden hamster).